A 222-amino-acid chain; its full sequence is Deoxyribose-phosphate aldolase (222 aa).

The active-site Proton donor/acceptor is Asp89. The Schiff-base intermediate with acetaldehyde role is filled by Lys151. Lys180 acts as the Proton donor/acceptor in catalysis.

Belongs to the DeoC/FbaB aldolase family. DeoC type 1 subfamily.

It localises to the cytoplasm. The enzyme catalyses 2-deoxy-D-ribose 5-phosphate = D-glyceraldehyde 3-phosphate + acetaldehyde. It participates in carbohydrate degradation; 2-deoxy-D-ribose 1-phosphate degradation; D-glyceraldehyde 3-phosphate and acetaldehyde from 2-deoxy-alpha-D-ribose 1-phosphate: step 2/2. Catalyzes a reversible aldol reaction between acetaldehyde and D-glyceraldehyde 3-phosphate to generate 2-deoxy-D-ribose 5-phosphate. The chain is Deoxyribose-phosphate aldolase from Acholeplasma laidlawii (strain PG-8A).